A 78-amino-acid polypeptide reads, in one-letter code: MSCCGGNCGCGSGCNGCGGCKMYPDLSYNESTTTETLVLGVGHEKTSFGTMEMGESPAAENGCKCGSECKCNPCACSK.

It belongs to the metallothionein superfamily. Type 15 family.

Metallothioneins have a high content of cysteine residues that bind various heavy metals. The protein is Metallothionein-like protein type 2 of Nicotiana glutinosa (Tobacco).